The sequence spans 257 residues: Transmembrane protein C257L (257 aa).

The next 2 membrane-spanning stretches (helical) occupy residues 123-143 (LELL…FTAL) and 163-183 (IMIF…YVLV).

This sequence belongs to the asfivirus C257R family.

It is found in the host membrane. The protein resides in the virion. This is Transmembrane protein C257L from African swine fever virus (isolate Pig/Kenya/KEN-50/1950) (ASFV).